Consider the following 329-residue polypeptide: uncharacterized protein (329 aa).

The next 9 helical transmembrane spans lie at 5 to 24 (NLLL…FLTV), 34 to 56 (IAVA…YLIF), 92 to 114 (FGYI…LEWG), 124 to 146 (IIFF…VLFY), 159 to 181 (SANF…LLSL), 196 to 218 (TAHR…LQYL), 231 to 253 (FSIV…LGAY), 263 to 285 (LIGV…RLFG), and 306 to 328 (FWLF…RILT).

The protein localises to the cell membrane. This is an uncharacterized protein from Archaeoglobus fulgidus (strain ATCC 49558 / DSM 4304 / JCM 9628 / NBRC 100126 / VC-16).